A 303-amino-acid chain; its full sequence is MRLSKAQYDEIALFISTLRPTRQCMKRLKERFPCQSQSTLLSIFSQEYQKMIKRTHAKHHTPEAVEMYYARYLNEVARDPKVPILLELANEVDFSPALMARTVLERFLQDHDGQPPTKPVLSSMLRDPSLIPDPVLANQVHLCIINDCFNGPLVDGIKHAIGHEHEVLLRQKLKEHNLAFLDEDQLRLKGYDKTPDVILEVPVAVDGHVIHWIESKASFGDEASHKTYLHDQFWSYWNRFGPGLVIYWYGFIEDLDCNRERGILLKDGFPETLVMLGSCMAQTDEHGQHTKNCLNETHQETES.

The protein resides in the nucleus. It localises to the cytoplasm. Functionally, may play a role in erythroid cell differentiation. The sequence is that of CDAN1-interacting nuclease 1 from Xenopus laevis (African clawed frog).